A 446-amino-acid chain; its full sequence is Nuclear envelope morphology protein 1 (446 aa).

The segment at 53-80 (VDQQYDHSSSHLKESDQNQERKNSVPKK) is disordered. Residues 56–75 (QYDHSSSHLKESDQNQERKN) show a composition bias toward basic and acidic residues. Residues 87 to 103 (ILIEKIASILWALLLFL) form a helical membrane-spanning segment. Positions 132-168 (HTDKRNRGSNASENELPVSSSNINDSSEKTNPKNCNL) are disordered. Positions 139–156 (GSNASENELPVSSSNIND) are enriched in polar residues. Residues 247-424 (NTQKKKKLVI…LNLLPFLEAM (178 aa)) enclose the FCP1 homology domain.

Belongs to the Dullard family. Component of the NEM1-SPO7 complex.

The protein resides in the endoplasmic reticulum membrane. Its subcellular location is the nucleus membrane. It catalyses the reaction O-phospho-L-seryl-[protein] + H2O = L-seryl-[protein] + phosphate. The enzyme catalyses O-phospho-L-threonyl-[protein] + H2O = L-threonyl-[protein] + phosphate. Its function is as follows. Catalytic component of the NEM1-SPO7 complex which acts as a phosphatase and dephosphorylates the phosphatidic acid phosphohydrolase PAH1. Essential for the formation of a spherical nucleus and meiotic division. The NEM1-SPOo7 protein phosphatase is required for efficient mitophagy under prolonged respiration, as well as for reticulophagy and pexophagy. This chain is Nuclear envelope morphology protein 1 (NEM1), found in Saccharomyces cerevisiae (strain ATCC 204508 / S288c) (Baker's yeast).